Here is a 397-residue protein sequence, read N- to C-terminus: Cercosporin biosynthesis regulatory protein CTB8 (397 aa).

A DNA-binding region (zn(2)-C6 fungal-type) is located at residues cysteine 26 to cysteine 53. Disordered stretches follow at residues threonine 63–serine 90 and alanine 173–histidine 198. Over residues proline 74–alanine 87 the composition is skewed to polar residues. Residues proline 179–threonine 197 show a composition bias toward low complexity.

Its subcellular location is the nucleus. In terms of biological role, transcription regulator of the gene cluster that mediates the biosynthesis of cercosporin, a light-activated, non-host-selective toxin. The perylenequinone chromophore of cercosporin absorbs light energy to attain an electronically-activated triplet state and produces active oxygen species such as the hydroxyl radical, superoxide, hydrogen peroxide or singlet oxygen upon reaction with oxygen molecules. These reactive oxygen species cause damage to various cellular components including lipids, proteins and nucleic acids. This is Cercosporin biosynthesis regulatory protein CTB8 from Cercospora beticola (Sugarbeet leaf spot fungus).